Here is a 244-residue protein sequence, read N- to C-terminus: Probable cytokinin riboside 5'-monophosphate phosphoribohydrolase LOGL2 (244 aa).

Residues Glu-91, 109-110, and 126-132 contribute to the substrate site; these read RK and GYGTLEE.

Belongs to the LOG family.

The catalysed reaction is N(6)-(dimethylallyl)adenosine 5'-phosphate + H2O = N(6)-dimethylallyladenine + D-ribose 5-phosphate. It carries out the reaction 9-ribosyl-trans-zeatin 5'-phosphate + H2O = trans-zeatin + D-ribose 5-phosphate. Functionally, cytokinin-activating enzyme working in the direct activation pathway. Phosphoribohydrolase that converts inactive cytokinin nucleotides to the biologically active free-base forms. The chain is Probable cytokinin riboside 5'-monophosphate phosphoribohydrolase LOGL2 (LOGL2) from Oryza sativa subsp. japonica (Rice).